The chain runs to 465 residues: Mothers against decapentaplegic homolog 5 (465 aa).

One can recognise an MH1 domain in the interval 13–137 (PAVKRLLGWK…YKRVESPVLP (125 aa)). Zn(2+)-binding residues include C65, C110, C122, and H127. The tract at residues 163 to 242 (NEPHMPHNAT…MGQDNSQSMD (80 aa)) is disordered. The span at 173 to 183 (FPDSFQQPNST) shows a compositional bias: polar residues. A compositionally biased stretch (low complexity) spans 198-214 (ASSTYPSSPASSGPSSP). The 195-residue stretch at 271–465 (WCSIVYYELN…SPLNPISSVS (195 aa)) folds into the MH2 domain.

This sequence belongs to the dwarfin/SMAD family. In terms of assembly, may form trimers with the co-SMAD SMAD4.

It localises to the cytoplasm. It is found in the nucleus. Functionally, transcriptional modulator activated by BMP (bone morphogenetic proteins) type 1 receptor kinase. SMAD5 is a receptor-regulated SMAD (R-SMAD). This Gallus gallus (Chicken) protein is Mothers against decapentaplegic homolog 5 (SMAD5).